Consider the following 825-residue polypeptide: Outer dense fiber protein 2 (825 aa).

Residues Val-22, Lys-37, Ser-68, and Ser-69 each carry the phosphoserine modification. The tract at residues 27–46 (LPKPSAASSQKSHKRGMKGD) is disordered. Position 87 is a phosphothreonine (Thr-87). A Phosphoserine; by TSSK4 modification is found at Ser-90. Phosphoserine occurs at positions 101 and 104. Thr-105 is modified (phosphothreonine). Phosphoserine occurs at positions 110 and 124. Lys-133 participates in a covalent cross-link: Glycyl lysine isopeptide (Lys-Gly) (interchain with G-Cter in SUMO2). At Ser-134 the chain carries Phosphoserine. Residues 139–212 (QKGERQMAKR…MSKLVEAEMD (74 aa)) are a coiled coil. Position 226 is a phosphothreonine (Thr-226). 2 coiled-coil regions span residues 240–418 (DINT…AEQL) and 456–793 (EIIV…NYVQ). Phosphoserine occurs at positions 256 and 627. An interaction with BBOF1 region spans residues 532-696 (KNYEGMIDNY…EAIHQAQLRL (165 aa)).

It belongs to the ODF2 family. In terms of assembly, self-associates. Associates with microtubules and forms a fibrillar structure partially linked to the microtubule network. Interacts through its C-terminus with PLK1. Interacts with ODF1. Interacts with MARK4; the interaction is required for localization of ODF2 to centrioles. Interacts with TSSK4. Interacts with AKNA. Interacts with QRICH2. Interacts with CFAP58. Interacts with BBOF1. Interacts with CCDC38. Interacts with CCDC42. Post-translationally, tyrosine phosphorylated. Phosphorylated on Ser-90 by TSSK4. As to expression, testis-specific. Expressed in the proximal compartment of the elongated spermatid tail; later expression progresses to the distal spermatid tail compartment located in the lumen of the seminiferous epithelium. In spermatids (stages II-III) expression of the tails peaks and remains strong during the remaining steps of spermiogenesis (at protein level). Expression correlates with the onset of spermatogenesis and is first detected at 30 days. Higher expression is seen in testis of 40-day-old and adults that are older than 50 days. No expression is seen in 10- and 20-day-old testes.

The protein resides in the cytoplasm. It is found in the cytoskeleton. Its subcellular location is the microtubule organizing center. The protein localises to the centrosome. It localises to the cell projection. The protein resides in the cilium. It is found in the centriole. Its subcellular location is the spindle pole. The protein localises to the flagellum. Its function is as follows. Seems to be a major component of sperm tail outer dense fibers (ODF). ODFs are filamentous structures located on the outside of the axoneme in the midpiece and principal piece of the mammalian sperm tail and may help to maintain the passive elastic structures and elastic recoil of the sperm tail. May have a modulating influence on sperm motility. Functions as a general scaffold protein that is specifically localized at the distal/subdistal appendages of mother centrioles. Component of the centrosome matrix required for the localization of PLK1 and NIN to the centrosomes. Required for the formation and/or maintenance of normal CETN1 assembly. The polypeptide is Outer dense fiber protein 2 (Odf2) (Rattus norvegicus (Rat)).